Here is a 912-residue protein sequence, read N- to C-terminus: Metabotropic glutamate receptor 4 (912 aa).

Positions 1–32 are cleaved as a signal peptide; that stretch reads MSGKGGWAWWWARLPLCLLLSLYAPWVPSSLG. Over 33-587 the chain is Extracellular; that stretch reads KPKGHPHMNS…IVKLEWDSPW (555 aa). Cys-67 and Cys-109 are oxidised to a cystine. Asn-98 carries an N-linked (GlcNAc...) asparagine glycan. L-glutamate-binding positions include Ser-159, 180–182, and Tyr-230; that span reads AST. 7 disulfides stabilise this stretch: Cys-249-Cys-538, Cys-372-Cys-388, Cys-428-Cys-435, Cys-520-Cys-539, Cys-524-Cys-542, Cys-545-Cys-557, and Cys-560-Cys-573. N-linked (GlcNAc...) asparagine glycosylation occurs at Asn-301. Asp-312 contributes to the L-glutamate binding site. Lys-405 contacts L-glutamate. N-linked (GlcNAc...) asparagine glycans are attached at residues Asn-454 and Asn-484. Residue Asn-569 is glycosylated (N-linked (GlcNAc...) asparagine). Residues 588 to 610 traverse the membrane as a helical segment; the sequence is AVLPLFLAVVGIAATLFVVVTFV. The Cytoplasmic segment spans residues 611 to 624; sequence RYNDTPIVKASGRE. A helical membrane pass occupies residues 625-645; that stretch reads LSYVLLAGIFLCYATTFLMIA. Residues 646–656 lie on the Extracellular side of the membrane; sequence EPDLGTCSLRR. A helical transmembrane segment spans residues 657-675; it reads IFLGLGMSISYAALLTKTN. Residues 676-699 are Cytoplasmic-facing; the sequence is RIYRIFEQGKRSVSAPRFISPASQ. A helical membrane pass occupies residues 700–720; that stretch reads LAITFILISLQLLGICVWFVV. Topologically, residues 721-750 are extracellular; it reads DPSHSVVDFQDQRTLDPRFARGVLKCDISD. A helical transmembrane segment spans residues 751 to 772; that stretch reads LSLICLLGYSMLLMVTCTVYAI. The Cytoplasmic portion of the chain corresponds to 773 to 785; that stretch reads KTRGVPETFNEAK. The helical transmembrane segment at 786–808 threads the bilayer; that stretch reads PIGFTMYTTCIVWLAFIPIFFGT. Residues 809 to 821 lie on the Extracellular side of the membrane; that stretch reads SQSADKLYIQTTT. A helical membrane pass occupies residues 822-847; sequence LTVSVSLSASVSLGMLYMPKVYIILF. Residues 848 to 912 lie on the Cytoplasmic side of the membrane; it reads HPEQNVPKRK…TYVTYTNHAI (65 aa).

This sequence belongs to the G-protein coupled receptor 3 family. Interacts with PICK1. In terms of tissue distribution, is widely distributed in the CNS. Predominant expression is seen in the granule cells of the cerebellum.

It is found in the cell membrane. G-protein coupled receptor for glutamate. Ligand binding causes a conformation change that triggers signaling via guanine nucleotide-binding proteins (G proteins) and modulates the activity of down-stream effectors. Signaling inhibits adenylate cyclase activity. The protein is Metabotropic glutamate receptor 4 (Grm4) of Rattus norvegicus (Rat).